Reading from the N-terminus, the 472-residue chain is Coronin-6 (472 aa).

6 WD repeats span residues 23–64, 72–111, 122–161, 165–204, 210–251, and 256–296; these read QAYE…VLPL, KNYP…VWQI, EPII…IWNV, EVLL…IIDP, VAEQ…LWDP, and EPVA…YFEI. Residues 407-433 form a disordered region; sequence KRNILDVRPPSGPRRSQSASDAPLSQQ. Over residues 420–433 the composition is skewed to polar residues; it reads RRSQSASDAPLSQQ. A coiled-coil region spans residues 430 to 464; that stretch reads LSQQHTLETLLEEIKALRERVQAQEQRITALENML.

In Homo sapiens (Human), this protein is Coronin-6 (CORO6).